A 504-amino-acid chain; its full sequence is Anthocyanidin 3-O-glucoside 5-O-glucosyltransferase (504 aa).

The active-site Proton acceptor is the H23. H23 contacts an anthocyanidin. The disordered stretch occupies residues 107-126 (TKKGQGQGQGQGQGQGQGQG). Residues 111-125 (QGQGQGQGQGQGQGQ) show a composition bias toward gly residues. Positions 157, 377, 392, 395, 396, 397, 400, 416, and 417 each coordinate UDP-alpha-D-glucose.

Belongs to the UDP-glycosyltransferase family. In terms of tissue distribution, predominantly expressed in petals and weakly in filaments. Not expressed in leaves, stems and other floral organs.

It catalyses the reaction an anthocyanidin 3-O-beta-D-glucoside + UDP-alpha-D-glucose = an anthocyanidin 3,5-di-O-beta-D-glucoside + UDP + 2 H(+). Its pathway is pigment biosynthesis; anthocyanin biosynthesis. Its function is as follows. Catalyzes the glucosylation at the O-5 position of anthocyanidin 3-glucosides to form anthocyanidin 3,5-di-O-glucosides using UDP-glucose as sugar donor. Anthocyanidin 3,5-di-O-glucosides are molecules that are responsible for pigmentation. Involved in biosynsthesis of accumulate gentiodelphin, a unique polyacylated delphinidin-type anthocyanin, in the petals. Also acts on anthocyanidin 3-O-(6-O-malonylglucoside). Much less active with hydroxycinnamoylglucose derivatives. No activity in the absence of the 3-O-glucoside group. This chain is Anthocyanidin 3-O-glucoside 5-O-glucosyltransferase (5GT7), found in Gentiana triflora (Clustered gentian).